Here is a 229-residue protein sequence, read N- to C-terminus: MSKAVVVFSGGQDSTTCLIQALQQFDEVHGITFDYGQRHREEIEIAKELATNLKLASHKVMDVTLLNELAISALTRDSIPVSNELMDNGLPNTFVPGRNILFLTLAGIYAYQLGADTVITGVCETDFSGYPDCRNDFVKAMQAALEQGMDKKLTIQTPLMWLDKAETWALADKFDSLELVRNETLTCYNGIKGDGCGTCPACLLRKRGLEEYLADKEAIQARLSAKCEN.

Position 8 to 18 (8 to 18 (FSGGQDSTTCL)) interacts with ATP. Residues Cys-187, Cys-196, Cys-199, and Cys-202 each coordinate Zn(2+).

This sequence belongs to the QueC family. Zn(2+) serves as cofactor.

The enzyme catalyses 7-carboxy-7-deazaguanine + NH4(+) + ATP = 7-cyano-7-deazaguanine + ADP + phosphate + H2O + H(+). The protein operates within purine metabolism; 7-cyano-7-deazaguanine biosynthesis. In terms of biological role, catalyzes the ATP-dependent conversion of 7-carboxy-7-deazaguanine (CDG) to 7-cyano-7-deazaguanine (preQ(0)). This Shewanella halifaxensis (strain HAW-EB4) protein is 7-cyano-7-deazaguanine synthase.